The sequence spans 869 residues: Valine--tRNA ligase (869 aa).

The short motif at 47-57 (PYPTGNFHIGN) is the 'HIGH' region element. The 'KMSKS' region motif lies at 521 to 525 (KMSKS). An ATP-binding site is contributed by lysine 524.

It belongs to the class-I aminoacyl-tRNA synthetase family. ValS type 2 subfamily.

The protein localises to the cytoplasm. The catalysed reaction is tRNA(Val) + L-valine + ATP = L-valyl-tRNA(Val) + AMP + diphosphate. Its function is as follows. Catalyzes the attachment of valine to tRNA(Val). As ValRS can inadvertently accommodate and process structurally similar amino acids such as threonine, to avoid such errors, it has a 'posttransfer' editing activity that hydrolyzes mischarged Thr-tRNA(Val) in a tRNA-dependent manner. In Methanosarcina acetivorans (strain ATCC 35395 / DSM 2834 / JCM 12185 / C2A), this protein is Valine--tRNA ligase.